Consider the following 356-residue polypeptide: Ferrochelatase (356 aa).

2 residues coordinate Fe cation: histidine 214 and glutamate 295.

It belongs to the ferrochelatase family.

Its subcellular location is the cytoplasm. It catalyses the reaction heme b + 2 H(+) = protoporphyrin IX + Fe(2+). The protein operates within porphyrin-containing compound metabolism; protoheme biosynthesis; protoheme from protoporphyrin-IX: step 1/1. In terms of biological role, catalyzes the ferrous insertion into protoporphyrin IX. The chain is Ferrochelatase from Paraburkholderia phytofirmans (strain DSM 17436 / LMG 22146 / PsJN) (Burkholderia phytofirmans).